Consider the following 538-residue polypeptide: Furcatin hydrolase (538 aa).

The transit peptide at 1–66 (MATITTLASS…NFNKDNWLAS (66 aa)) directs the protein to the chloroplast. Positions 18 to 37 (SFPGGSSRKPKKDNLSIKPP) are disordered. Residues Gln-88, His-192, and 237 to 238 (NE) contribute to the a beta-D-glucoside site. The active-site Proton donor is the Glu-238. Cysteines 257 and 260 form a disulfide. A beta-D-glucoside-binding positions include Tyr-376, Glu-447, Trp-494, 501–502 (EW), and Phe-510. The active-site Nucleophile is Glu-447.

This sequence belongs to the glycosyl hydrolase 1 family. In terms of tissue distribution, expressed in young and mature leaves, but not in fruit and stem.

Its subcellular location is the plastid. It localises to the chloroplast. It carries out the reaction 7-[beta-D-apiofuranosyl-(1-&gt;6)-beta-D-glucopyranosyloxy]isoflavonoid + H2O = a 7-hydroxyisoflavonoid + beta-D-apiofuranosyl-(1-&gt;6)-D-glucose.. Functionally, disaccharide-specific acuminosidase, hydrolyzes the beta-glycosidic bond between p-allylphenol and acuminose with retention of anomeric configuration. Has highest activity towards furcatin, and lower activity towards beta-primeverosides and beta-vicianoside. Has very low activity towards beta-gentobiosides. This is Furcatin hydrolase from Viburnum furcatum (Scarlet leaved viburnum).